We begin with the raw amino-acid sequence, 567 residues long: Sensor histidine kinase MtrB (567 aa).

The segment covering 1–15 has biased composition (basic residues); sequence MIFGSRRRIRGRRGR. The interval 1 to 20 is disordered; the sequence is MIFGSRRRIRGRRGRSGPMT. 2 helical membrane passes run 42 to 62 and 213 to 233; these read VVAL…FVLT and GTMA…ALLV. Residues 235 to 287 form the HAMP domain; that stretch reads RQVVVPVRSASRIAERFAEGHLSERMPVRGEDDMARLAVSFNDMAESLSRQIA. In terms of domain architecture, Histidine kinase spans 302 to 519; sequence DVSHELRTPL…CFRLTLPLVR (218 aa). Histidine 305 carries the post-translational modification Phosphohistidine; by autocatalysis. Positions 526–567 are disordered; the sequence is SPLPMKPIPQPVLQPVAQPNPQPMPPEYKERQRPREHAEWSG. Over residues 529-551 the composition is skewed to pro residues; the sequence is PMKPIPQPVLQPVAQPNPQPMPP. Basic and acidic residues predominate over residues 552 to 567; that stretch reads EYKERQRPREHAEWSG.

The protein resides in the cell membrane. The enzyme catalyses ATP + protein L-histidine = ADP + protein N-phospho-L-histidine.. In terms of biological role, member of the two-component regulatory system MtrA/MtrB. Seems to function as a membrane-associated protein kinase that phosphorylates MtrA in response to environmental signals. The chain is Sensor histidine kinase MtrB (mtrB) from Mycobacterium bovis (strain ATCC BAA-935 / AF2122/97).